The chain runs to 74 residues: Exodeoxyribonuclease 7 small subunit (74 aa).

This sequence belongs to the XseB family. Heterooligomer composed of large and small subunits.

Its subcellular location is the cytoplasm. It carries out the reaction Exonucleolytic cleavage in either 5'- to 3'- or 3'- to 5'-direction to yield nucleoside 5'-phosphates.. In terms of biological role, bidirectionally degrades single-stranded DNA into large acid-insoluble oligonucleotides, which are then degraded further into small acid-soluble oligonucleotides. The polypeptide is Exodeoxyribonuclease 7 small subunit (Synechococcus elongatus (strain ATCC 33912 / PCC 7942 / FACHB-805) (Anacystis nidulans R2)).